The sequence spans 252 residues: uncharacterized protein (252 aa).

The N-terminal stretch at 1 to 23 (MKLLKTVPAIVMLAGGMFASLNA) is a signal peptide. Residues 231-252 (EPPESAPEHTDRRTTLSLGYSM) form a disordered region.

This is an uncharacterized protein from Escherichia coli (strain K12).